Reading from the N-terminus, the 374-residue chain is MEILRIEPTPSPNTMKVVLSYTREDKLSNTYKKVEETQPRFINQLLSIDGITSIFHVMNFLAVDKAPKADWEVILPDIKAAFSDANKVLESVNEPQIDNHFGEIKAELLTFKGIPYQIKLTSADQELREQLPQTYVDHMTQAQTAHDNIVFMRKWLDLGNRYGNIQEVMDGVLEEVLATYPESQLPVLVKHALEENHATNNYHFYRHVSLDEYHATDNWKTRLRMLNHFPKPTFEDIPLLDLALSDEKVPVRRQAIVLLGMIESKEILPYLYKGLRDKSPAVRRTAGDCISDLGYPEALPEMVLLLDDPQKIVRWRAAMFIFDEGNAEQLPALKAHINDNAFEVKLQIEMAISRIENGDEALGSVWKQMANRTI.

Belongs to the CvfC family.

Required for hemolysin production. Contributes to virulence in both silkworm-infection model and mice. This is Conserved virulence factor C (cvfC) from Staphylococcus aureus (strain NCTC 8325 / PS 47).